Consider the following 848-residue polypeptide: Translation initiation factor IF-2 (848 aa).

Residues 106-150 (TEQQTEAENSTNINLSEQTIKNNSHQSSSNTIETTQEKKQNDDLS) form a disordered region. Residues 112–139 (AENSTNINLSEQTIKNNSHQSSSNTIET) are compositionally biased toward polar residues. Residues 347 to 517 (PRAPIITVMG…LLLADMLELK (171 aa)) enclose the tr-type G domain. Residues 356–363 (GHVDHGKT) are G1. 356–363 (GHVDHGKT) contributes to the GTP binding site. A G2 region spans residues 381 to 385 (GITQH). A G3 region spans residues 403–406 (DTPG). Residues 403 to 407 (DTPGH) and 457 to 460 (NKID) each bind GTP. The segment at 457-460 (NKID) is G4. Positions 493-495 (SAL) are G5.

The protein belongs to the TRAFAC class translation factor GTPase superfamily. Classic translation factor GTPase family. IF-2 subfamily.

It is found in the cytoplasm. Its function is as follows. One of the essential components for the initiation of protein synthesis. Protects formylmethionyl-tRNA from spontaneous hydrolysis and promotes its binding to the 30S ribosomal subunits. Also involved in the hydrolysis of GTP during the formation of the 70S ribosomal complex. This Orientia tsutsugamushi (strain Boryong) (Rickettsia tsutsugamushi) protein is Translation initiation factor IF-2.